Reading from the N-terminus, the 370-residue chain is Histidinol-phosphate aminotransferase 1 (370 aa).

K229 carries the N6-(pyridoxal phosphate)lysine modification.

Belongs to the class-II pyridoxal-phosphate-dependent aminotransferase family. Histidinol-phosphate aminotransferase subfamily. In terms of assembly, homodimer. Requires pyridoxal 5'-phosphate as cofactor.

The enzyme catalyses L-histidinol phosphate + 2-oxoglutarate = 3-(imidazol-4-yl)-2-oxopropyl phosphate + L-glutamate. It participates in amino-acid biosynthesis; L-histidine biosynthesis; L-histidine from 5-phospho-alpha-D-ribose 1-diphosphate: step 7/9. The chain is Histidinol-phosphate aminotransferase 1 from Nitrosococcus oceani (strain ATCC 19707 / BCRC 17464 / JCM 30415 / NCIMB 11848 / C-107).